The primary structure comprises 941 residues: Putative helicase 121R (941 aa).

Residues 285–323 adopt a coiled-coil conformation; sequence LKQELKDIEGENSETIKRNLKDAKDLLKILNKKRANEYN. Positions 492–514 are disordered; sequence DDSGRDSEEDSQEEEVSSSQEQL. The segment covering 498–507 has biased composition (acidic residues); sequence SEEDSQEEEV. The region spanning 609 to 791 is the SF3 helicase domain; sequence EEVLELYNFL…FVAREKCPET (183 aa). 653 to 660 contributes to the ATP binding site; sequence GNGNNGKS.

This sequence belongs to the IIV-6 184L family.

The protein is Putative helicase 121R of Invertebrate iridescent virus 3 (IIV-3).